The primary structure comprises 372 residues: Dual-specificity RNA methyltransferase RlmN (372 aa).

The active-site Proton acceptor is the glutamate 92. A Radical SAM core domain is found at 98–337 (ETDRATLCVS…VILRKTRGDD (240 aa)). A disulfide bond links cysteine 105 and cysteine 342. Cysteine 112, cysteine 116, and cysteine 119 together coordinate [4Fe-4S] cluster. S-adenosyl-L-methionine-binding positions include 166-167 (GE), serine 198, 220-222 (SLH), and asparagine 299. Cysteine 342 functions as the S-methylcysteine intermediate in the catalytic mechanism.

The protein belongs to the radical SAM superfamily. RlmN family. It depends on [4Fe-4S] cluster as a cofactor.

The protein resides in the cytoplasm. The enzyme catalyses adenosine(2503) in 23S rRNA + 2 reduced [2Fe-2S]-[ferredoxin] + 2 S-adenosyl-L-methionine = 2-methyladenosine(2503) in 23S rRNA + 5'-deoxyadenosine + L-methionine + 2 oxidized [2Fe-2S]-[ferredoxin] + S-adenosyl-L-homocysteine. It carries out the reaction adenosine(37) in tRNA + 2 reduced [2Fe-2S]-[ferredoxin] + 2 S-adenosyl-L-methionine = 2-methyladenosine(37) in tRNA + 5'-deoxyadenosine + L-methionine + 2 oxidized [2Fe-2S]-[ferredoxin] + S-adenosyl-L-homocysteine. Its function is as follows. Specifically methylates position 2 of adenine 2503 in 23S rRNA and position 2 of adenine 37 in tRNAs. m2A2503 modification seems to play a crucial role in the proofreading step occurring at the peptidyl transferase center and thus would serve to optimize ribosomal fidelity. The polypeptide is Dual-specificity RNA methyltransferase RlmN (Histophilus somni (strain 129Pt) (Haemophilus somnus)).